The chain runs to 1202 residues: Calmodulin-binding transcription activator 2 (1202 aa).

Residues 30–155 (RCPLLPPERL…YLNVPALEDC (126 aa)) constitute a DNA-binding region (CG-1). The Nuclear localization signal signature appears at 79–86 (RKKVKYRK). Disordered stretches follow at residues 263–322 (SIPH…SRGG), 361–409 (GTEP…AHTP), and 421–491 (PQAA…LFGG). Residues 270-283 (PEPPPLIAPLPPEL) are compositionally biased toward pro residues. 2 stretches are compositionally biased toward low complexity: residues 289 to 299 (SPSSSSSSSSS) and 313 to 322 (TSRGGSSRGG). 2 stretches are compositionally biased toward pro residues: residues 365–374 (SAPPAPPSPA) and 460–476 (PPIP…PAPL). An IPT/TIG domain is found at 537–615 (DFSPEWSYPE…LSASVLFEYR (79 aa)). ANK repeat units follow at residues 712 to 745 (MSLL…DLEQ), 757 to 787 (CTPL…SIPD), and 791 to 821 (RLPL…SVEP). Disordered stretches follow at residues 817 to 874 (PSVE…ASEM) and 906 to 929 (PLSS…ADSP). Composition is skewed to low complexity over residues 826 to 846 (SPPS…SELS) and 906 to 917 (PLSSLPALPPAS). IQ domains are found at residues 1049–1078 (YEAA…AAVI) and 1102–1131 (TQAA…AVLI).

The protein belongs to the CAMTA family. May interact with calmodulin. As to expression, detected in brain. Expressed at constant levels throughout the cell cycle in neuroblastoma cell lines.

It is found in the nucleus. Transcription activator. May act as tumor suppressor. This Homo sapiens (Human) protein is Calmodulin-binding transcription activator 2 (CAMTA2).